We begin with the raw amino-acid sequence, 521 residues long: Bifunctional purine biosynthesis protein PurH (521 aa).

One can recognise an MGS-like domain in the interval 1 to 147 (MGEITRALIS…KNWEGVTVLV (147 aa)).

The protein belongs to the PurH family.

The catalysed reaction is (6R)-10-formyltetrahydrofolate + 5-amino-1-(5-phospho-beta-D-ribosyl)imidazole-4-carboxamide = 5-formamido-1-(5-phospho-D-ribosyl)imidazole-4-carboxamide + (6S)-5,6,7,8-tetrahydrofolate. It catalyses the reaction IMP + H2O = 5-formamido-1-(5-phospho-D-ribosyl)imidazole-4-carboxamide. It participates in purine metabolism; IMP biosynthesis via de novo pathway; 5-formamido-1-(5-phospho-D-ribosyl)imidazole-4-carboxamide from 5-amino-1-(5-phospho-D-ribosyl)imidazole-4-carboxamide (10-formyl THF route): step 1/1. Its pathway is purine metabolism; IMP biosynthesis via de novo pathway; IMP from 5-formamido-1-(5-phospho-D-ribosyl)imidazole-4-carboxamide: step 1/1. This chain is Bifunctional purine biosynthesis protein PurH, found in Acidithiobacillus ferrooxidans (strain ATCC 53993 / BNL-5-31) (Leptospirillum ferrooxidans (ATCC 53993)).